The primary structure comprises 251 residues: Malonyl-[acyl-carrier protein] O-methyltransferase (251 aa).

This sequence belongs to the methyltransferase superfamily.

It carries out the reaction malonyl-[ACP] + S-adenosyl-L-methionine = malonyl-[ACP] methyl ester + S-adenosyl-L-homocysteine. The protein operates within cofactor biosynthesis; biotin biosynthesis. Converts the free carboxyl group of a malonyl-thioester to its methyl ester by transfer of a methyl group from S-adenosyl-L-methionine (SAM). It allows to synthesize pimeloyl-ACP via the fatty acid synthetic pathway. The polypeptide is Malonyl-[acyl-carrier protein] O-methyltransferase (Salmonella typhimurium (strain LT2 / SGSC1412 / ATCC 700720)).